Reading from the N-terminus, the 763-residue chain is ATP-dependent Clp protease ATP-binding subunit ClpL (763 aa).

The interval 136–386 is i; that stretch reads IEKLGTNLTE…FSGKNSQTDV (251 aa). Residues 181–188 and 511–518 each bind ATP; these read GESGVGKT and GPTGVGKT. Positions 437–629 are II; sequence ATIDDVAQSV…IIIMTSNAGF (193 aa).

This sequence belongs to the ClpA/ClpB family.

Its function is as follows. Could be the ATP-dependent specificity component of an ATP-dependent protease. This Lactococcus lactis subsp. lactis (Streptococcus lactis) protein is ATP-dependent Clp protease ATP-binding subunit ClpL (clpL).